A 2473-amino-acid chain; its full sequence is Reducing polyketide synthase grgA (2473 aa).

One can recognise a Ketosynthase family 3 (KS3) domain in the interval 15–446; the sequence is REPIAIVGSS…GTNAHAIIES (432 aa). Residues C188, H327, and H366 each act as for beta-ketoacyl synthase activity in the active site. The region spanning 559 to 882 is the Malonyl-CoA:ACP transacylase (MAT) domain; the sequence is IFTGQGAQWA…SGVLKRGQNA (324 aa). Residues 956–1099 are N-terminal hotdog fold; it reads HELLGHSVTH…GGVRLWLGEP (144 aa). The dehydratase (DH) domain stretch occupies residues 956-1260; sequence HELLGHSVTH…IHLSAVGQRR (305 aa). The 307-residue stretch at 956-1262 folds into the PKS/mFAS DH domain; it reads HELLGHSVTH…LSAVGQRRDP (307 aa). H990 functions as the Proton acceptor; for dehydratase activity in the catalytic mechanism. Positions 1114-1262 are C-terminal hotdog fold; the sequence is MEALDMEQLY…LSAVGQRRDP (149 aa). The active-site Proton donor; for dehydratase activity is D1172. Residues 1300-1606 form a methyltransfrase (MT) domain region; the sequence is TAYFYLRQLR…PSFCSVIVAQ (307 aa). One can recognise a Ketoreductase (KR) domain in the interval 2108-2281; that stretch reads TYLLCGMTGD…AGSVIHIAIL (174 aa). In terms of domain architecture, Carrier spans 2388 to 2473; the sequence is AECLVILESC…LVEWRRLNKS (86 aa). Position 2426 is an O-(pantetheine 4'-phosphoryl)serine (S2426).

Pantetheine 4'-phosphate serves as cofactor.

It functions in the pathway secondary metabolite biosynthesis. Reducing polyketide synthase; part of the gene cluster that mediates the biosynthesis of gregatin A, a fungal polyketide featuring an alkylated furanone core. The PKS grgA synthesizes C11 and C4 polyketide chains in the presence and absence of the trans-enoyl reductase grgB, respectively. The polyketide transferase grgF is then responsible for the fusion of the two carbon chains to produce the furanone skeleton of gregatin A. Next, the cytochrome P450 monooxygenase grgG accepts performs the oxidative cyclization to furnish the gregatin scaffold and leads to the formation of desmethylgregatin A. Finally, the O-methyltransferase grgD methylates the carboxyl group of desmethylgregatin A to provide gregatin A. The protein is Reducing polyketide synthase grgA of Penicillium sp.